The sequence spans 448 residues: Glucose-6-phosphate isomerase (448 aa).

Glu290 acts as the Proton donor in catalysis. Catalysis depends on residues His311 and Lys425.

It belongs to the GPI family.

The protein resides in the cytoplasm. It carries out the reaction alpha-D-glucose 6-phosphate = beta-D-fructose 6-phosphate. The protein operates within carbohydrate biosynthesis; gluconeogenesis. It participates in carbohydrate degradation; glycolysis; D-glyceraldehyde 3-phosphate and glycerone phosphate from D-glucose: step 2/4. Catalyzes the reversible isomerization of glucose-6-phosphate to fructose-6-phosphate. This chain is Glucose-6-phosphate isomerase, found in Acetivibrio thermocellus (strain ATCC 27405 / DSM 1237 / JCM 9322 / NBRC 103400 / NCIMB 10682 / NRRL B-4536 / VPI 7372) (Clostridium thermocellum).